The following is a 244-amino-acid chain: MILYPAIDLLDGRVVRLHKGAFDAVTDYGDDPMRVAEQFGEAGAVWVHIVDLSGARDGARRQGALIRSLCETGLRVQTGGGVRSAEDIEDLLAAGVERVIIGSLAVTDTNRVAGWLQNYGGDRITLALDVRQIGGQYRPALKGWTDMADTTLDDVISAYEGTGLAHALVTDIGRDGDLSGPNIALYKRLATDYPNIDWQASGGVSSLDDLRAARAAGAAGAITGKALYEGRFTVGEAIACLRDA.

Asp-8 serves as the catalytic Proton acceptor. The Proton donor role is filled by Asp-129.

It belongs to the HisA/HisF family.

It localises to the cytoplasm. It catalyses the reaction 1-(5-phospho-beta-D-ribosyl)-5-[(5-phospho-beta-D-ribosylamino)methylideneamino]imidazole-4-carboxamide = 5-[(5-phospho-1-deoxy-D-ribulos-1-ylimino)methylamino]-1-(5-phospho-beta-D-ribosyl)imidazole-4-carboxamide. It participates in amino-acid biosynthesis; L-histidine biosynthesis; L-histidine from 5-phospho-alpha-D-ribose 1-diphosphate: step 4/9. The protein is 1-(5-phosphoribosyl)-5-[(5-phosphoribosylamino)methylideneamino] imidazole-4-carboxamide isomerase of Maricaulis maris (strain MCS10) (Caulobacter maris).